Here is a 393-residue protein sequence, read N- to C-terminus: Cobalt-precorrin-5B C(1)-methyltransferase (393 aa).

The tract at residues 1–35 is disordered; the sequence is MSDETRVGEAAEQAATPEKIRKGSARRERGNRTGF. Basic and acidic residues predominate over residues 18–31; that stretch reads EKIRKGSARRERGN.

This sequence belongs to the CbiD family.

The enzyme catalyses Co-precorrin-5B + S-adenosyl-L-methionine = Co-precorrin-6A + S-adenosyl-L-homocysteine. It participates in cofactor biosynthesis; adenosylcobalamin biosynthesis; cob(II)yrinate a,c-diamide from sirohydrochlorin (anaerobic route): step 6/10. Catalyzes the methylation of C-1 in cobalt-precorrin-5B to form cobalt-precorrin-6A. This Dechloromonas aromatica (strain RCB) protein is Cobalt-precorrin-5B C(1)-methyltransferase.